Reading from the N-terminus, the 150-residue chain is Large ribosomal subunit protein uL15 (150 aa).

Positions 1-51 (MKLHTLRPAKGSVKTSKRIGRGTGSGRGGTSTKGHKGAKSRSGYSSKIGFE) are disordered. The span at 21-31 (RGTGSGRGGTS) shows a compositional bias: gly residues.

Belongs to the universal ribosomal protein uL15 family. As to quaternary structure, part of the 50S ribosomal subunit.

Its function is as follows. Binds to the 23S rRNA. The polypeptide is Large ribosomal subunit protein uL15 (Cytophaga hutchinsonii (strain ATCC 33406 / DSM 1761 / CIP 103989 / NBRC 15051 / NCIMB 9469 / D465)).